A 331-amino-acid chain; its full sequence is Taste receptor type 2 member 38 (331 aa).

Over 1-17 the chain is Extracellular; it reads MLTLTPVLTVSYEAKIS. Residues 18-38 form a helical membrane-spanning segment; sequence FLFLSVVEFAVGIMANAFIVL. Over 39–54 the chain is Cytoplasmic; that stretch reads VNFWDMVKKQPLNNCD. Residues 55-75 form a helical membrane-spanning segment; sequence IALLCLSITRLFLQGLLLLDA. The Extracellular portion of the chain corresponds to 76–94; the sequence is IQLACFQQMKDPLSHNYQA. The chain crosses the membrane as a helical span at residues 95–115; the sequence is ILTLWMSANQVSLWLAACLSL. Residues 116-142 lie on the Cytoplasmic side of the membrane; it reads LYCAKIVRFSHTFPLHLASWVSRRFLQ. Residues 143-163 form a helical membrane-spanning segment; sequence MLLVALLFSGVCTALCLWDFF. The Extracellular segment spans residues 164 to 198; it reads SRSHTVVTSMLHMNNTEFNLQIEKLNFFYSFVFCN. Asparagine 177 carries N-linked (GlcNAc...) asparagine glycosylation. A helical transmembrane segment spans residues 199-219; the sequence is VGSVPPSLVFLISSGVLVISL. The Cytoplasmic portion of the chain corresponds to 220-243; that stretch reads GNHMRTMKSQTRGSRDPSLEAHVR. The chain crosses the membrane as a helical span at residues 244-264; that stretch reads AIIFLVSFLCFYVVSFCAALI. Residues 265-276 are Extracellular-facing; it reads SIPLLVLWHNKG. A helical transmembrane segment spans residues 277-297; the sequence is GVMVCIGMMAACPSGHAAILI. At 298–331 the chain is on the cytoplasmic side; it reads SGNAKLKKVIVTILFWFQSRQKVRRVHKVLPRIL.

Belongs to the G-protein coupled receptor T2R family. As to expression, expressed in tongue, stomach and duodenum.

The protein resides in the membrane. Putative taste receptor which may play a role in the perception of bitterness. This chain is Taste receptor type 2 member 38 (Tas2r38), found in Rattus norvegicus (Rat).